The following is a 199-amino-acid chain: N-(5'-phosphoribosyl)anthranilate isomerase (199 aa).

Belongs to the TrpF family.

The enzyme catalyses N-(5-phospho-beta-D-ribosyl)anthranilate = 1-(2-carboxyphenylamino)-1-deoxy-D-ribulose 5-phosphate. The protein operates within amino-acid biosynthesis; L-tryptophan biosynthesis; L-tryptophan from chorismate: step 3/5. In Sulfolobus acidocaldarius (strain ATCC 33909 / DSM 639 / JCM 8929 / NBRC 15157 / NCIMB 11770), this protein is N-(5'-phosphoribosyl)anthranilate isomerase.